The chain runs to 370 residues: Aminomethyltransferase (370 aa).

Belongs to the GcvT family. The glycine cleavage system is composed of four proteins: P, T, L and H.

The catalysed reaction is N(6)-[(R)-S(8)-aminomethyldihydrolipoyl]-L-lysyl-[protein] + (6S)-5,6,7,8-tetrahydrofolate = N(6)-[(R)-dihydrolipoyl]-L-lysyl-[protein] + (6R)-5,10-methylene-5,6,7,8-tetrahydrofolate + NH4(+). In terms of biological role, the glycine cleavage system catalyzes the degradation of glycine. This Prochlorococcus marinus (strain MIT 9515) protein is Aminomethyltransferase.